Reading from the N-terminus, the 130-residue chain is Small ribosomal subunit protein uS8 (130 aa).

Belongs to the universal ribosomal protein uS8 family. In terms of assembly, part of the 30S ribosomal subunit. Contacts proteins S5 and S12.

Functionally, one of the primary rRNA binding proteins, it binds directly to 16S rRNA central domain where it helps coordinate assembly of the platform of the 30S subunit. The polypeptide is Small ribosomal subunit protein uS8 (Wigglesworthia glossinidia brevipalpis).